Reading from the N-terminus, the 139-residue chain is Putative pre-16S rRNA nuclease (139 aa).

It belongs to the YqgF nuclease family.

Its subcellular location is the cytoplasm. Functionally, could be a nuclease involved in processing of the 5'-end of pre-16S rRNA. In Streptococcus pneumoniae serotype 19F (strain G54), this protein is Putative pre-16S rRNA nuclease.